A 178-amino-acid polypeptide reads, in one-letter code: Ribulose bisphosphate carboxylase small subunit, chloroplastic 2 (178 aa).

A chloroplast-targeting transit peptide spans 1 to 54 (MASISSTVATVSRAAPAQANMVAPFTGLKSNVAFPATKKANDFSTLPSNGGRVQ).

This sequence belongs to the RuBisCO small chain family. Heterohexadecamer of 8 large and 8 small subunits.

The protein localises to the plastid. It localises to the chloroplast. RuBisCO catalyzes two reactions: the carboxylation of D-ribulose 1,5-bisphosphate, the primary event in carbon dioxide fixation, as well as the oxidative fragmentation of the pentose substrate. Both reactions occur simultaneously and in competition at the same active site. Although the small subunit is not catalytic it is essential for maximal activity. This Flaveria pringlei protein is Ribulose bisphosphate carboxylase small subunit, chloroplastic 2.